Reading from the N-terminus, the 174-residue chain is Cell division protein FtsL (174 aa).

The Cytoplasmic segment spans residues 1–38 (MLAAPRELSYIPQPVVSSKQSPRSGLSNRRRESRARQK). The helical transmembrane segment at 39–59 (ILLLGLVLMGFVIGLSLTFLT) threads the bilayer. At 60-174 (MQVLIKGYKI…EPARQAGAGV (115 aa)) the chain is on the extracellular side.

The protein belongs to the FtsL family.

The protein localises to the cell membrane. Functionally, essential cell division protein. The protein is Cell division protein FtsL of Moorella thermoacetica (strain ATCC 39073 / JCM 9320).